Consider the following 517-residue polypeptide: GMP synthase [glutamine-hydrolyzing] (517 aa).

Positions 11–202 (KIIALDFGSQ…AFDVCGAKAN (192 aa)) constitute a Glutamine amidotransferase type-1 domain. Catalysis depends on cysteine 88, which acts as the Nucleophile. Catalysis depends on residues histidine 176 and glutamate 178. The region spanning 203-392 (WTMDDFIDMQ…LGIPHELVWR (190 aa)) is the GMPS ATP-PPase domain. 230-236 (SGGVDSS) is a binding site for ATP.

As to quaternary structure, homodimer.

It carries out the reaction XMP + L-glutamine + ATP + H2O = GMP + L-glutamate + AMP + diphosphate + 2 H(+). It functions in the pathway purine metabolism; GMP biosynthesis; GMP from XMP (L-Gln route): step 1/1. In terms of biological role, catalyzes the synthesis of GMP from XMP. The chain is GMP synthase [glutamine-hydrolyzing] from Limosilactobacillus reuteri (strain DSM 20016) (Lactobacillus reuteri).